The primary structure comprises 600 residues: Torsin-1A-interacting protein 1 (600 aa).

Residues 1–14 (MAGEGQRAEPEREG) show a composition bias toward basic and acidic residues. Disordered regions lie at residues 1–261 (MAGE…YKES) and 310–346 (MRSI…QPKS). Residues 1–354 (MAGEGQRAEP…KSVSSVKTKR (354 aa)) are Nuclear-facing. S61 is modified (phosphoserine). Composition is skewed to basic and acidic residues over residues 71 to 81 (FEPRAAKEKAR), 91 to 102 (FRPDSAKEEVRE), and 116 to 125 (RLHEAEEMQT). Phosphoserine occurs at positions 137, 145, 156, 158, 159, and 189. The span at 192–203 (PLISLRRPPLRS) shows a compositional bias: low complexity. The span at 219 to 232 (EEGETEENDQDSFD) shows a compositional bias: acidic residues. A Phosphothreonine modification is found at T223. Phosphoserine occurs at positions 230, 233, and 244. Positions 247–261 (SGDQTTRSSSQYKES) are enriched in polar residues. S322 carries the post-translational modification Phosphoserine. Residue K325 forms a Glycyl lysine isopeptide (Lys-Gly) (interchain with G-Cter in SUMO2) linkage. Positions 325–346 (KSELGNQSPSTSNQQMTGQPKS) are enriched in polar residues. Position 332 is a phosphoserine (S332). The helical transmembrane segment at 355–371 (YWPFAVIAALLIGGFLY) threads the bilayer. Over 372–600 (TRPPEAETTA…ENDLKKGICL (229 aa)) the chain is Perinuclear space. Residues 373 to 600 (RPPEAETTAV…ENDLKKGICL (228 aa)) are interaction with TOR1A. The stretch at 376–452 (EAETTAVQEF…SEQIADAYSS (77 aa)) forms a coiled coil. N416 carries an N-linked (GlcNAc...) asparagine glycan.

Belongs to the TOR1AIP family. Interacts with ATP1B4. Interacts with TOR1A (ATP-bound). Interacts with TOR1B, TOR2A and TOR3A. Interacts with VIM.

It is found in the nucleus inner membrane. In terms of biological role, required for nuclear membrane integrity. Induces TOR1A and TOR1B ATPase activity and is required for their location on the nuclear membrane. Binds to A- and B-type lamins. Possible role in membrane attachment and assembly of the nuclear lamina. The protein is Torsin-1A-interacting protein 1 (TOR1AIP1) of Bos taurus (Bovine).